Consider the following 84-residue polypeptide: MNRTRALVCLFLAVLILAHESEAQCRRLCYRNRCVTYCRGRGKRSVEEPSGGAQVVEKRAVDDADIPSAVEERELDEEESIEFR.

The N-terminal stretch at Met-1 to Ala-23 is a signal peptide. Gln-24 is subject to Pyrrolidone carboxylic acid. Disulfide bonds link Cys-25–Cys-38 and Cys-29–Cys-34. Arg-41 is modified (arginine amide). Residues Gly-42 to Arg-84 constitute a propeptide that is removed on maturation.

In terms of tissue distribution, expressed by the venom gland.

It is found in the secreted. Antibacterial peptide. The polypeptide is Gomesin-like peptide (Hadronyche infensa (Fraser island funnel-web spider)).